Reading from the N-terminus, the 427-residue chain is Glucose-1-phosphate adenylyltransferase (427 aa).

Residues arginine 40, histidine 46, and arginine 52 each coordinate AMP. Tyrosine 114 lines the alpha-D-glucose 1-phosphate pocket. Position 130 (arginine 130) interacts with AMP. Residues glycine 179, 194 to 195 (EK), and serine 212 each bind alpha-D-glucose 1-phosphate. Arginine 386 contacts AMP.

Belongs to the bacterial/plant glucose-1-phosphate adenylyltransferase family. As to quaternary structure, homotetramer.

The catalysed reaction is alpha-D-glucose 1-phosphate + ATP + H(+) = ADP-alpha-D-glucose + diphosphate. Its pathway is glycan biosynthesis; glycogen biosynthesis. Its activity is regulated as follows. Allosterically activated by fructose-1,6-bisphosphate (F16BP) and inhibited by AMP. Functionally, involved in the biosynthesis of ADP-glucose, a building block required for the elongation reactions to produce glycogen. Catalyzes the reaction between ATP and alpha-D-glucose 1-phosphate (G1P) to produce pyrophosphate and ADP-Glc. This Cronobacter sakazakii (strain ATCC BAA-894) (Enterobacter sakazakii) protein is Glucose-1-phosphate adenylyltransferase.